Consider the following 348-residue polypeptide: Mitogen-activated protein kinase 14B (348 aa).

One can recognise a Protein kinase domain in the interval 25–309 (YQNLSPVGSG…ASQALAHPYF (285 aa)). Residues 31–39 (VGSGAYGSV) and Lys54 each bind ATP. The active-site Proton acceptor is the Asp169. Thr181 carries the post-translational modification Phosphothreonine; by MAP2K3. The short motif at 181–183 (TGY) is the TXY element. Tyr183 is modified (phosphotyrosine; by MAP2K3).

It belongs to the protein kinase superfamily. CMGC Ser/Thr protein kinase family. MAP kinase subfamily. Mg(2+) is required as a cofactor. In terms of processing, dually phosphorylated on Thr-181 and Tyr-183, which activates the enzyme.

Its subcellular location is the cytoplasm. It localises to the nucleus. The catalysed reaction is L-seryl-[protein] + ATP = O-phospho-L-seryl-[protein] + ADP + H(+). It catalyses the reaction L-threonyl-[protein] + ATP = O-phospho-L-threonyl-[protein] + ADP + H(+). Activated by threonine and tyrosine phosphorylation by the dual specificity kinase, MKK3. Serine/threonine kinase which acts as an essential component of the MAP kinase signal transduction pathway. Mapk14b is one of the four p38 MAPKs which play an important role in the cascades of cellular responses evoked by extracellular stimuli such as pro-inflammatory cytokines or physical stress leading to direct activation of transcription factors. Accordingly, p38 MAPKs phosphorylate a broad range of proteins and it has been estimated that they may have approximately 200 to 300 substrates each. Some of the targets are downstream kinases which are activated through phosphorylation and further phosphorylate additional targets. The polypeptide is Mitogen-activated protein kinase 14B (mapk14b) (Danio rerio (Zebrafish)).